The primary structure comprises 145 residues: Large ribosomal subunit protein uL11 (145 aa).

The protein belongs to the universal ribosomal protein uL11 family. Part of the ribosomal stalk of the 50S ribosomal subunit. Interacts with L10 and the large rRNA to form the base of the stalk. L10 forms an elongated spine to which L12 dimers bind in a sequential fashion forming a multimeric L10(L12)X complex. Post-translationally, one or more lysine residues are methylated.

In terms of biological role, forms part of the ribosomal stalk which helps the ribosome interact with GTP-bound translation factors. This chain is Large ribosomal subunit protein uL11, found in Coxiella burnetii (strain Dugway 5J108-111).